The primary structure comprises 275 residues: MRLLDGRSMAADIGRSVVDDVERLATTGVTPTLAVVLPTADEAARSYVRVIERGAAKVGVGCAVHELTGDPDELTATVDRLAADPAVHGMIVQTPLPDGLTAADVGARIPVGKDVDGMNPLSLGRLALGLPAFAPATAAAVLEILNRAAVPLAGARACVIGRSSVVGKPAALLLLAEDATVTVCHSRTKDLATVAHDADIVVAAVGRPKMVGAGHVRPGAVVIDVGTNWTDAGLVGDVDADAVAPVAGALTPVPGGVGPVTTMLLLRNTVRAAGG.

Residues 161 to 163 (GRS), serine 186, and threonine 227 each bind NADP(+).

It belongs to the tetrahydrofolate dehydrogenase/cyclohydrolase family. As to quaternary structure, homodimer.

It carries out the reaction (6R)-5,10-methylene-5,6,7,8-tetrahydrofolate + NADP(+) = (6R)-5,10-methenyltetrahydrofolate + NADPH. The enzyme catalyses (6R)-5,10-methenyltetrahydrofolate + H2O = (6R)-10-formyltetrahydrofolate + H(+). Its pathway is one-carbon metabolism; tetrahydrofolate interconversion. In terms of biological role, catalyzes the oxidation of 5,10-methylenetetrahydrofolate to 5,10-methenyltetrahydrofolate and then the hydrolysis of 5,10-methenyltetrahydrofolate to 10-formyltetrahydrofolate. The polypeptide is Bifunctional protein FolD (Parafrankia sp. (strain EAN1pec)).